The sequence spans 94 residues: uncharacterized protein (94 aa).

This is an uncharacterized protein from Bacillus subtilis (strain 168).